Reading from the N-terminus, the 239-residue chain is Phosphoribosylaminoimidazole-succinocarboxamide synthase (239 aa).

The protein belongs to the SAICAR synthetase family.

It catalyses the reaction 5-amino-1-(5-phospho-D-ribosyl)imidazole-4-carboxylate + L-aspartate + ATP = (2S)-2-[5-amino-1-(5-phospho-beta-D-ribosyl)imidazole-4-carboxamido]succinate + ADP + phosphate + 2 H(+). The protein operates within purine metabolism; IMP biosynthesis via de novo pathway; 5-amino-1-(5-phospho-D-ribosyl)imidazole-4-carboxamide from 5-amino-1-(5-phospho-D-ribosyl)imidazole-4-carboxylate: step 1/2. The chain is Phosphoribosylaminoimidazole-succinocarboxamide synthase from Bacillus thuringiensis subsp. konkukian (strain 97-27).